The primary structure comprises 141 residues: Large ribosomal subunit protein uL11 (141 aa).

The protein belongs to the universal ribosomal protein uL11 family. Part of the ribosomal stalk of the 50S ribosomal subunit. Interacts with L10 and the large rRNA to form the base of the stalk. L10 forms an elongated spine to which L12 dimers bind in a sequential fashion forming a multimeric L10(L12)X complex. In terms of processing, one or more lysine residues are methylated.

In terms of biological role, forms part of the ribosomal stalk which helps the ribosome interact with GTP-bound translation factors. This is Large ribosomal subunit protein uL11 from Phytoplasma australiense.